Consider the following 257-residue polypeptide: Imidazole glycerol phosphate synthase subunit HisF (257 aa).

Active-site residues include D12 and D131.

It belongs to the HisA/HisF family. In terms of assembly, heterodimer of HisH and HisF.

The protein localises to the cytoplasm. The catalysed reaction is 5-[(5-phospho-1-deoxy-D-ribulos-1-ylimino)methylamino]-1-(5-phospho-beta-D-ribosyl)imidazole-4-carboxamide + L-glutamine = D-erythro-1-(imidazol-4-yl)glycerol 3-phosphate + 5-amino-1-(5-phospho-beta-D-ribosyl)imidazole-4-carboxamide + L-glutamate + H(+). It functions in the pathway amino-acid biosynthesis; L-histidine biosynthesis; L-histidine from 5-phospho-alpha-D-ribose 1-diphosphate: step 5/9. Functionally, IGPS catalyzes the conversion of PRFAR and glutamine to IGP, AICAR and glutamate. The HisF subunit catalyzes the cyclization activity that produces IGP and AICAR from PRFAR using the ammonia provided by the HisH subunit. In Burkholderia orbicola (strain MC0-3), this protein is Imidazole glycerol phosphate synthase subunit HisF.